Consider the following 400-residue polypeptide: Acetate kinase (400 aa).

Position 10 (asparagine 10) interacts with Mg(2+). ATP is bound at residue lysine 17. A substrate-binding site is contributed by arginine 91. Aspartate 150 serves as the catalytic Proton donor/acceptor. ATP-binding positions include 210–214, 285–287, and 333–337; these read HLGGG, DFR, and GIGEN. Glutamate 387 provides a ligand contact to Mg(2+).

This sequence belongs to the acetokinase family. As to quaternary structure, homodimer. The cofactor is Mg(2+). Mn(2+) is required as a cofactor.

The protein resides in the cytoplasm. It catalyses the reaction acetate + ATP = acetyl phosphate + ADP. Its pathway is metabolic intermediate biosynthesis; acetyl-CoA biosynthesis; acetyl-CoA from acetate: step 1/2. Functionally, catalyzes the formation of acetyl phosphate from acetate and ATP. Can also catalyze the reverse reaction. This Buchnera aphidicola subsp. Baizongia pistaciae (strain Bp) protein is Acetate kinase.